The chain runs to 355 residues: Neutral protease 2 homolog MEP6 (355 aa).

The signal sequence occupies residues 1–19 (MRLSSSLIALVALAGQALA). Positions 20 to 179 (LPFNELAERD…ASAIPELNKR (160 aa)) are excised as a propeptide. Disulfide bonds link Cys187–Cys259 and Cys266–Cys283. A Zn(2+)-binding site is contributed by His307. Glu308 is a catalytic residue. Zn(2+) contacts are provided by His311 and Asp322.

The protein belongs to the peptidase M35 family. Zn(2+) serves as cofactor.

It is found in the secreted. It catalyses the reaction Preferential cleavage of bonds with hydrophobic residues in P1'. Also 3-Asn-|-Gln-4 and 8-Gly-|-Ser-9 bonds in insulin B chain.. Its function is as follows. Secreted metalloproteinase that allows assimilation of proteinaceous substrates. Shows high activities on basic nuclear substrates such as histone and protamine. May be involved in virulence. This is Neutral protease 2 homolog MEP6 (MEP6) from Coccidioides posadasii (strain C735) (Valley fever fungus).